Reading from the N-terminus, the 357-residue chain is Protein BIG GRAIN 1-like A (357 aa).

Disordered stretches follow at residues 1–146 (MEIT…KELG) and 208–233 (SSTCSSASSFSRSCLSKTPSSSGKSK). Over residues 75–87 (DFERSRRKTDFLR) the composition is skewed to basic and acidic residues. 2 stretches are compositionally biased toward low complexity: residues 88–104 (HSNSSSSDSSGFSSSES) and 112–127 (KSSASPPSSSRQQPKP). Positions 129 to 139 (RTSSVDHSSAV) are enriched in polar residues. Over residues 208-223 (SSTCSSASSFSRSCLS) the composition is skewed to low complexity.

Belongs to the BIG GRAIN 1 (BG1) plant protein family.

It is found in the cell membrane. Its function is as follows. Involved in auxin transport. Regulator of the auxin signaling pathway. This Arabidopsis thaliana (Mouse-ear cress) protein is Protein BIG GRAIN 1-like A.